Reading from the N-terminus, the 77-residue chain is Conotoxin King-Kong 2 (77 aa).

The first 22 residues, Met1–Ala22, serve as a signal peptide directing secretion. Positions Asp23–Asn49 are excised as a propeptide. Disulfide bonds link Cys52–Cys67, Cys59–Cys71, and Cys66–Cys76. At Cys76 the chain carries Cysteine amide.

This sequence belongs to the conotoxin O1 superfamily. As to expression, expressed by the venom duct.

Its subcellular location is the secreted. This Conus textile (Cloth-of-gold cone) protein is Conotoxin King-Kong 2.